The chain runs to 1042 residues: Isoleucine--tRNA ligase (1042 aa).

The 'HIGH' region motif lies at 48–58; sequence PFATGLPHFGH. The 'KMSKS' region motif lies at 594–598; sequence KMSKS. Lys-597 provides a ligand contact to ATP.

This sequence belongs to the class-I aminoacyl-tRNA synthetase family. IleS type 2 subfamily. Monomer. Zn(2+) serves as cofactor.

Its subcellular location is the cytoplasm. The enzyme catalyses tRNA(Ile) + L-isoleucine + ATP = L-isoleucyl-tRNA(Ile) + AMP + diphosphate. Catalyzes the attachment of isoleucine to tRNA(Ile). As IleRS can inadvertently accommodate and process structurally similar amino acids such as valine, to avoid such errors it has two additional distinct tRNA(Ile)-dependent editing activities. One activity is designated as 'pretransfer' editing and involves the hydrolysis of activated Val-AMP. The other activity is designated 'posttransfer' editing and involves deacylation of mischarged Val-tRNA(Ile). In Borrelia garinii subsp. bavariensis (strain ATCC BAA-2496 / DSM 23469 / PBi) (Borreliella bavariensis), this protein is Isoleucine--tRNA ligase.